The primary structure comprises 973 residues: Translation initiation factor IF-2 (973 aa).

Positions 97–135 (GHIDLDGGQHKKQQEEPKAKEEPKVKEEPKVKEEPKVKE) are enriched in basic and acidic residues. Disordered regions lie at residues 97–343 (GHID…EDVQ) and 353–372 (LTNK…DKRD). Positions 136–155 (APAAPAAQAPVKPAQPAQAP) are enriched in low complexity. Basic and acidic residues-rich tracts occupy residues 156 to 175 (TEKK…KTVE), 183 to 204 (PKVE…DDNL), 212 to 224 (LESK…KIDL), and 237 to 250 (TKEE…EKQK). Low complexity predominate over residues 252–266 (NNNRPGNNSNGPGAP). Basic and acidic residues-rich tracts occupy residues 315 to 326 (PNRDDRPNNDRK) and 333 to 343 (VKAEVSEEDVQ). Residues 472 to 642 (ARPPIVTVMG…LLEADLLDLK (171 aa)) form the tr-type G domain. The interval 481–488 (GHVDHGKT) is G1. 481 to 488 (GHVDHGKT) contacts GTP. The G2 stretch occupies residues 506–510 (GITQH). The interval 528 to 531 (DTPG) is G3. Residues 528 to 532 (DTPGH) and 582 to 585 (NKID) each bind GTP. Positions 582–585 (NKID) are G4. Residues 618–620 (SAK) form a G5 region.

It belongs to the TRAFAC class translation factor GTPase superfamily. Classic translation factor GTPase family. IF-2 subfamily.

The protein localises to the cytoplasm. Its function is as follows. One of the essential components for the initiation of protein synthesis. Protects formylmethionyl-tRNA from spontaneous hydrolysis and promotes its binding to the 30S ribosomal subunits. Also involved in the hydrolysis of GTP during the formation of the 70S ribosomal complex. In Parabacteroides distasonis (strain ATCC 8503 / DSM 20701 / CIP 104284 / JCM 5825 / NCTC 11152), this protein is Translation initiation factor IF-2.